Reading from the N-terminus, the 547-residue chain is Chaperonin GroEL (547 aa).

Residues 30-33, Lys-51, 87-91, Gly-415, and Asp-496 each bind ATP; these read TLGP and DGTTT. The tract at residues 528–547 is disordered; it reads DKSDMPAMPPGGMGGMGGMY. Over residues 538–547 the composition is skewed to gly residues; sequence GGMGGMGGMY.

This sequence belongs to the chaperonin (HSP60) family. In terms of assembly, forms a cylinder of 14 subunits composed of two heptameric rings stacked back-to-back. Interacts with the co-chaperonin GroES.

The protein resides in the cytoplasm. The enzyme catalyses ATP + H2O + a folded polypeptide = ADP + phosphate + an unfolded polypeptide.. Functionally, together with its co-chaperonin GroES, plays an essential role in assisting protein folding. The GroEL-GroES system forms a nano-cage that allows encapsulation of the non-native substrate proteins and provides a physical environment optimized to promote and accelerate protein folding. The protein is Chaperonin GroEL of Chlorobium luteolum (strain DSM 273 / BCRC 81028 / 2530) (Pelodictyon luteolum).